The following is a 170-amino-acid chain: MLRQLLVLVGLAVVCLADEHEHCCSEEDHRIVQKQWDILWRDTESSKIKIGFGRLLLTKLAKDIPDVNDLFKRVDIEHAEGPKFSAHALRILNGLDLAINLLDDPPALDAALDHLAHQHEVREGVQKAHFKKFGEILATGLPQVLDDYDALAWKSCLKGILTKISSRLNA.

Residues M1 to A17 form the signal peptide. One can recognise a Globin domain in the interval C23–N169. Cysteines 24 and 156 form a disulfide. H119 is a binding site for heme b.

This sequence belongs to the globin family. The extracellular hemoglobin of the earthworm consists of 12 subunits that have a hexagonal bilayer structure with a molecular weight near 3.8 million. Each one-twelfth subunit is composed primarily of disulfide linked trimers (chains A, B, and C) and monomers (chain D).

Its subcellular location is the secreted. The chain is Extracellular globin-3 from Lumbricus terrestris (Common earthworm).